The following is a 262-amino-acid chain: Sugar fermentation stimulation protein homolog (262 aa).

The protein belongs to the SfsA family.

This is Sugar fermentation stimulation protein homolog from Lawsonia intracellularis (strain PHE/MN1-00).